The chain runs to 388 residues: Formate-dependent phosphoribosylglycinamide formyltransferase (388 aa).

Residues 20 to 21 (EL) and E80 contribute to the N(1)-(5-phospho-beta-D-ribosyl)glycinamide site. ATP-binding positions include R112, K153, 158-163 (SSGKGQ), 193-196 (EEFV), and E201. The region spanning 117 to 306 (RLASEKLGLR…EFEIHVRSIL (190 aa)) is the ATP-grasp domain. Mg(2+) is bound by residues E265 and E277. N(1)-(5-phospho-beta-D-ribosyl)glycinamide contacts are provided by residues D284, K352, and 359 to 360 (RR).

It belongs to the PurK/PurT family. As to quaternary structure, homodimer.

It carries out the reaction N(1)-(5-phospho-beta-D-ribosyl)glycinamide + formate + ATP = N(2)-formyl-N(1)-(5-phospho-beta-D-ribosyl)glycinamide + ADP + phosphate + H(+). Its pathway is purine metabolism; IMP biosynthesis via de novo pathway; N(2)-formyl-N(1)-(5-phospho-D-ribosyl)glycinamide from N(1)-(5-phospho-D-ribosyl)glycinamide (formate route): step 1/1. Involved in the de novo purine biosynthesis. Catalyzes the transfer of formate to 5-phospho-ribosyl-glycinamide (GAR), producing 5-phospho-ribosyl-N-formylglycinamide (FGAR). Formate is provided by PurU via hydrolysis of 10-formyl-tetrahydrofolate. The protein is Formate-dependent phosphoribosylglycinamide formyltransferase of Methanococcus vannielii (strain ATCC 35089 / DSM 1224 / JCM 13029 / OCM 148 / SB).